The chain runs to 739 residues: Polyribonucleotide nucleotidyltransferase (739 aa).

Positions 488 and 494 each coordinate Mg(2+). A KH domain is found at 555–614 (PKIVTLKINPDKIRDVIGPGGKVINGIIDETGVKIDIDQDGTVFIASTDQDGINHARQLI). Residues 624-692 (GEEFDGTVRR…DKGRVNASHK (69 aa)) form the S1 motif domain. Residues 698–739 (GMSPEDRAAYDEKKKTERDSRPPRRDTGSRPPRDGQRPPRRN) are disordered. Residues 701–739 (PEDRAAYDEKKKTERDSRPPRRDTGSRPPRDGQRPPRRN) show a composition bias toward basic and acidic residues.

The protein belongs to the polyribonucleotide nucleotidyltransferase family. Mg(2+) is required as a cofactor.

The protein localises to the cytoplasm. The catalysed reaction is RNA(n+1) + phosphate = RNA(n) + a ribonucleoside 5'-diphosphate. In terms of biological role, involved in mRNA degradation. Catalyzes the phosphorolysis of single-stranded polyribonucleotides processively in the 3'- to 5'-direction. This Exiguobacterium sibiricum (strain DSM 17290 / CCUG 55495 / CIP 109462 / JCM 13490 / 255-15) protein is Polyribonucleotide nucleotidyltransferase.